The chain runs to 62 residues: MEKSSQIHGSKPGDDNADEPENAAGQSQIRKQGADDLLDEIDGLLESNAEEFVRSYVQKGGQ.

Residues 1–36 (MEKSSQIHGSKPGDDNADEPENAAGQSQIRKQGADD) form a disordered region. The interval 18-56 (DEPENAAGQSQIRKQGADDLLDEIDGLLESNAEEFVRSY) is ARC ATPase binding. Gln62 carries the post-translational modification Deamidated glutamine. An Isoglutamyl lysine isopeptide (Gln-Lys) (interchain with K-? in acceptor proteins) cross-link involves residue Gln62.

This sequence belongs to the prokaryotic ubiquitin-like protein family. In terms of assembly, strongly interacts with the proteasome-associated ATPase ARC through a hydrophobic interface; the interacting region of Pup lies in its C-terminal half. There is one Pup binding site per ARC hexamer ring. Is modified by deamidation of its C-terminal glutamine to glutamate by the deamidase Dop, a prerequisite to the subsequent pupylation process.

Its pathway is protein degradation; proteasomal Pup-dependent pathway. Its function is as follows. Protein modifier that is covalently attached to lysine residues of substrate proteins, thereby targeting them for proteasomal degradation. The tagging system is termed pupylation. The polypeptide is Prokaryotic ubiquitin-like protein Pup (Corynebacterium kroppenstedtii (strain DSM 44385 / JCM 11950 / CIP 105744 / CCUG 35717)).